Here is a 189-residue protein sequence, read N- to C-terminus: 2-oxoglutarate synthase subunit KorC (189 aa).

As to quaternary structure, heterotetramer of the KorA, KorB, KorC and KorD subunits.

It carries out the reaction 2 oxidized [2Fe-2S]-[ferredoxin] + 2-oxoglutarate + CoA = succinyl-CoA + 2 reduced [2Fe-2S]-[ferredoxin] + CO2 + H(+). This chain is 2-oxoglutarate synthase subunit KorC (korC), found in Methanothermobacter thermautotrophicus (strain ATCC 29096 / DSM 1053 / JCM 10044 / NBRC 100330 / Delta H) (Methanobacterium thermoautotrophicum).